Reading from the N-terminus, the 109-residue chain is Sperm-specific class P protein 16 (109 aa).

In terms of domain architecture, MSP spans 2–109; the sequence is SLTADPPACT…TVTIPMSATA (108 aa).

In terms of tissue distribution, expressed at higher level in testis.

This Caenorhabditis elegans protein is Sperm-specific class P protein 16 (ssp-16).